We begin with the raw amino-acid sequence, 250 residues long: Proteasome subunit alpha (250 aa).

Belongs to the peptidase T1A family. As to quaternary structure, the 20S proteasome core is composed of 14 alpha and 14 beta subunits that assemble into four stacked heptameric rings, resulting in a barrel-shaped structure. The two inner rings, each composed of seven catalytic beta subunits, are sandwiched by two outer rings, each composed of seven alpha subunits. The catalytic chamber with the active sites is on the inside of the barrel. Has a gated structure, the ends of the cylinder being occluded by the N-termini of the alpha-subunits. Is capped at one or both ends by the proteasome regulatory ATPase, PAN.

The protein resides in the cytoplasm. Its activity is regulated as follows. The formation of the proteasomal ATPase PAN-20S proteasome complex, via the docking of the C-termini of PAN into the intersubunit pockets in the alpha-rings, triggers opening of the gate for substrate entry. Interconversion between the open-gate and close-gate conformations leads to a dynamic regulation of the 20S proteasome proteolysis activity. Functionally, component of the proteasome core, a large protease complex with broad specificity involved in protein degradation. This Methanobrevibacter smithii (strain ATCC 35061 / DSM 861 / OCM 144 / PS) protein is Proteasome subunit alpha.